The sequence spans 545 residues: Glucose-6-phosphate isomerase (545 aa).

The Proton donor role is filled by Glu-351. Residues His-382 and Lys-510 contribute to the active site.

It belongs to the GPI family.

The protein localises to the cytoplasm. It carries out the reaction alpha-D-glucose 6-phosphate = beta-D-fructose 6-phosphate. It participates in carbohydrate biosynthesis; gluconeogenesis. The protein operates within carbohydrate degradation; glycolysis; D-glyceraldehyde 3-phosphate and glycerone phosphate from D-glucose: step 2/4. Functionally, catalyzes the reversible isomerization of glucose-6-phosphate to fructose-6-phosphate. This is Glucose-6-phosphate isomerase from Helicobacter acinonychis (strain Sheeba).